The following is a 143-amino-acid chain: Interleukin-4 (143 aa).

The first 19 residues, 1–19, serve as a signal peptide directing secretion; the sequence is MGLSPQLAAVLLCLLVCTG. Cystine bridges form between Cys48–Cys88 and Cys70–Cys115. N-linked (GlcNAc...) asparagine glycosylation is found at Asn62 and Asn91.

The protein belongs to the IL-4/IL-13 family.

Its subcellular location is the secreted. In terms of biological role, participates in at least several B-cell activation processes as well as of other cell types. It is a costimulator of DNA-synthesis. It induces the expression of class II MHC molecules on resting B-cells. It enhances both secretion and cell surface expression of IgE and IgG1. It also regulates the expression of the low affinity Fc receptor for IgE (CD23) on both lymphocytes and monocytes. Positively regulates IL31RA expression in macrophages. Stimulates autophagy in dendritic cells by interfering with mTORC1 signaling and through the induction of RUFY4. The sequence is that of Interleukin-4 (IL4) from Meriones unguiculatus (Mongolian jird).